The primary structure comprises 241 residues: Uridylate kinase (241 aa).

ATP is bound at residue 9–10 (GS). G44 is a binding site for UMP. ATP is bound by residues G45 and R49. UMP contacts are provided by residues D66 and 114-120 (VVAGQTT). 3 residues coordinate ATP: T140, F146, and D149.

It belongs to the UMP kinase family. In terms of assembly, homohexamer.

It localises to the cytoplasm. The catalysed reaction is UMP + ATP = UDP + ADP. It functions in the pathway pyrimidine metabolism; CTP biosynthesis via de novo pathway; UDP from UMP (UMPK route): step 1/1. With respect to regulation, inhibited by UTP. In terms of biological role, catalyzes the reversible phosphorylation of UMP to UDP. This is Uridylate kinase from Halobacterium salinarum (strain ATCC 29341 / DSM 671 / R1).